The sequence spans 130 residues: Annexin A1 (130 aa).

Residue Q19 forms an Isoglutamyl lysine isopeptide (Gln-Lys) (interchain with K-?) linkage. S24 is modified (phosphoserine; by PKC). 2 Annexin repeats span residues 37–108 and 109–130; these read FDPS…ALLK and TPAQFDAEELRASMKGLGTDRR. Ca(2+) is bound by residues G54, V55, E57, K92, L95, E100, M122, G124, G126, T127, and R130.

It belongs to the annexin family.

Its subcellular location is the nucleus. It localises to the cytoplasm. It is found in the cell projection. The protein localises to the cilium. The protein resides in the basolateral cell membrane. Its subcellular location is the lateral cell membrane. It localises to the cell membrane. It is found in the apical cell membrane. The protein localises to the membrane. The protein resides in the early endosome. Its subcellular location is the cytoplasmic vesicle membrane. It localises to the endosome membrane. It is found in the secreted. The protein localises to the extracellular space. The protein resides in the extracellular exosome. Its subcellular location is the cytoplasmic vesicle. It localises to the secretory vesicle lumen. It is found in the phagocytic cup. Plays important roles in the innate immune response as effector of glucocorticoid-mediated responses and regulator of the inflammatory process. Has anti-inflammatory activity. Plays a role in glucocorticoid-mediated down-regulation of the early phase of the inflammatory response. Promotes resolution of inflammation and wound healing. Functions at least in part by activating the formyl peptide receptors and downstream signaling cascades. Promotes chemotaxis of granulocytes and monocytes via activation of the formyl peptide receptors. Contributes to the adaptive immune response by enhancing signaling cascades that are triggered by T-cell activation, regulates differentiation and proliferation of activated T-cells. Promotes the differentiation of T-cells into Th1 cells and negatively regulates differentiation into Th2 cells. Has no effect on unstimulated T-cells. Promotes rearrangement of the actin cytoskeleton, cell polarization and cell migration. Negatively regulates hormone exocytosis via activation of the formyl peptide receptors and reorganization of the actin cytoskeleton. Has high affinity for Ca(2+) and can bind up to eight Ca(2+) ions. Displays Ca(2+)-dependent binding to phospholipid membranes. Plays a role in the formation of phagocytic cups and phagosomes. Plays a role in phagocytosis by mediating the Ca(2+)-dependent interaction between phagosomes and the actin cytoskeleton. The sequence is that of Annexin A1 (ANXA1) from Gallus gallus (Chicken).